A 274-amino-acid chain; its full sequence is UPF0173 metal-dependent hydrolase A2cp1_1196 (274 aa).

This sequence belongs to the UPF0173 family.

This Anaeromyxobacter dehalogenans (strain 2CP-1 / ATCC BAA-258) protein is UPF0173 metal-dependent hydrolase A2cp1_1196.